A 136-amino-acid chain; its full sequence is uncharacterized protein (136 aa).

The disordered stretch occupies residues 1 to 100 (MQSREPSGWR…PCSGGPDRPE (100 aa)). The segment covering 66-75 (RLLRWHHRVP) has biased composition (basic residues).

This is an uncharacterized protein from Homo sapiens (Human).